A 164-amino-acid chain; its full sequence is Phosphopantetheine adenylyltransferase (164 aa).

A substrate-binding site is contributed by Ser-10. Residues 10–11 and His-18 each bind ATP; that span reads SF. 3 residues coordinate substrate: Lys-42, Met-74, and Arg-88. ATP-binding positions include 89–91, Glu-99, and 124–130; these read GLR and YFFVSAR.

It belongs to the bacterial CoaD family. Homohexamer. The cofactor is Mg(2+).

It localises to the cytoplasm. The catalysed reaction is (R)-4'-phosphopantetheine + ATP + H(+) = 3'-dephospho-CoA + diphosphate. It functions in the pathway cofactor biosynthesis; coenzyme A biosynthesis; CoA from (R)-pantothenate: step 4/5. Reversibly transfers an adenylyl group from ATP to 4'-phosphopantetheine, yielding dephospho-CoA (dPCoA) and pyrophosphate. This chain is Phosphopantetheine adenylyltransferase, found in Anaeromyxobacter dehalogenans (strain 2CP-1 / ATCC BAA-258).